We begin with the raw amino-acid sequence, 285 residues long: Pantothenate synthetase (285 aa).

30-37 (MGFLHEGH) is a binding site for ATP. His37 serves as the catalytic Proton donor. Gln61 is a binding site for (R)-pantoate. Gln61 provides a ligand contact to beta-alanine. ATP is bound at residue 147-150 (GQKD). (R)-pantoate is bound at residue Gln153. ATP-binding positions include Val176 and 184–187 (KSSR).

This sequence belongs to the pantothenate synthetase family. In terms of assembly, homodimer.

It localises to the cytoplasm. It catalyses the reaction (R)-pantoate + beta-alanine + ATP = (R)-pantothenate + AMP + diphosphate + H(+). Its pathway is cofactor biosynthesis; (R)-pantothenate biosynthesis; (R)-pantothenate from (R)-pantoate and beta-alanine: step 1/1. Its function is as follows. Catalyzes the condensation of pantoate with beta-alanine in an ATP-dependent reaction via a pantoyl-adenylate intermediate. The chain is Pantothenate synthetase from Listeria innocua serovar 6a (strain ATCC BAA-680 / CLIP 11262).